A 532-amino-acid polypeptide reads, in one-letter code: Apolipoprotein N-acyltransferase (532 aa).

The next 6 membrane-spanning stretches (helical) occupy residues 37 to 57 (IFVA…GAIA), 75 to 95 (WWFG…ALLV), 106 to 126 (LAVL…AMIA), 128 to 148 (LLWS…ALAE), 179 to 199 (VIGL…PALL), and 207 to 227 (TGIG…AWTL). Residues 245–494 (VQPSIAQAMK…VGVVDSYLPS (250 aa)) enclose the CN hydrolase domain. E289 serves as the catalytic Proton acceptor. Residue K353 is part of the active site. C406 functions as the Nucleophile in the catalytic mechanism. A helical transmembrane segment spans residues 505-525 (GWIQTVLILLTLLAASVGLIL).

Belongs to the CN hydrolase family. Apolipoprotein N-acyltransferase subfamily.

Its subcellular location is the cell inner membrane. It catalyses the reaction N-terminal S-1,2-diacyl-sn-glyceryl-L-cysteinyl-[lipoprotein] + a glycerophospholipid = N-acyl-S-1,2-diacyl-sn-glyceryl-L-cysteinyl-[lipoprotein] + a 2-acyl-sn-glycero-3-phospholipid + H(+). It participates in protein modification; lipoprotein biosynthesis (N-acyl transfer). Its function is as follows. Catalyzes the phospholipid dependent N-acylation of the N-terminal cysteine of apolipoprotein, the last step in lipoprotein maturation. The chain is Apolipoprotein N-acyltransferase from Brucella melitensis biotype 1 (strain ATCC 23456 / CCUG 17765 / NCTC 10094 / 16M).